Here is a 62-residue protein sequence, read N- to C-terminus: Large ribosomal subunit protein bL35 (62 aa).

Positions Glu-25–Ile-62 are disordered. A compositionally biased stretch (basic and acidic residues) spans Ser-53–Ile-62.

This sequence belongs to the bacterial ribosomal protein bL35 family.

This Mycoplasmopsis fermentans (Mycoplasma fermentans) protein is Large ribosomal subunit protein bL35.